The following is a 1135-amino-acid chain: Nonribosomal peptide synthetase 9 (1135 aa).

The condensation 1 stretch occupies residues 23–77 (TKQITTATYIKLAWAVVISCNTGSNDTVFGITVNGRGAPIDGAGEMTGATIATIP). The interval 177-562 (SYAELIRSAN…RRIDEIQEAT (386 aa)) is adenylation. The segment at 485–507 (GPSPPVGRSSSNRAGSGRCAMGS) is disordered. Over residues 491-502 (GRSSSNRAGSGR) the composition is skewed to low complexity. The region spanning 672 to 748 (APSNRVEQDL…AIANKIGDVQ (77 aa)) is the Carrier domain. Position 709 is an O-(pantetheine 4'-phosphoryl)serine (serine 709). A condensation 2 region spans residues 746-999 (DVQRAAIKLV…TTLWPVVAQV (254 aa)).

Belongs to the NRP synthetase family.

In terms of biological role, nonribosomal peptide synthesis (NRPS) is a key mechanism responsible for the biosynthesis of bioactive metabolites which are potentially contributing to organismal virulence. This Aspergillus fumigatus (strain ATCC MYA-4609 / CBS 101355 / FGSC A1100 / Af293) (Neosartorya fumigata) protein is Nonribosomal peptide synthetase 9 (NRPS9).